The primary structure comprises 549 residues: Glucose-6-phosphate isomerase (549 aa).

Glu355 serves as the catalytic Proton donor. Residues His386 and Lys514 contribute to the active site.

The protein belongs to the GPI family.

It is found in the cytoplasm. It carries out the reaction alpha-D-glucose 6-phosphate = beta-D-fructose 6-phosphate. It functions in the pathway carbohydrate biosynthesis; gluconeogenesis. Its pathway is carbohydrate degradation; glycolysis; D-glyceraldehyde 3-phosphate and glycerone phosphate from D-glucose: step 2/4. In terms of biological role, catalyzes the reversible isomerization of glucose-6-phosphate to fructose-6-phosphate. This chain is Glucose-6-phosphate isomerase, found in Salmonella paratyphi C (strain RKS4594).